The following is a 184-amino-acid chain: Large ribosomal subunit protein uL6 (184 aa).

The protein belongs to the universal ribosomal protein uL6 family. Part of the 50S ribosomal subunit.

Functionally, this protein binds to the 23S rRNA, and is important in its secondary structure. It is located near the subunit interface in the base of the L7/L12 stalk, and near the tRNA binding site of the peptidyltransferase center. The sequence is that of Large ribosomal subunit protein uL6 from Mycoplasma pneumoniae (strain ATCC 29342 / M129 / Subtype 1) (Mycoplasmoides pneumoniae).